The following is a 115-amino-acid chain: Gonadotropin subunit beta-2 (115 aa).

Cystine bridges form between cysteine 6/cysteine 54, cysteine 20/cysteine 69, cysteine 23/cysteine 107, cysteine 31/cysteine 85, cysteine 35/cysteine 87, and cysteine 90/cysteine 97. An N-linked (GlcNAc...) asparagine glycan is attached at asparagine 10.

This sequence belongs to the glycoprotein hormones subunit beta family. As to quaternary structure, heterodimer of an alpha and a beta chain.

The protein resides in the secreted. Its function is as follows. Involved in gametogenesis and steroidogenesis. The protein is Gonadotropin subunit beta-2 (cgbb) of Thunnus obesus (Bigeye tuna).